Here is a 485-residue protein sequence, read N- to C-terminus: Cysteine--tRNA ligase (485 aa).

C27 provides a ligand contact to Zn(2+). The short motif at 29 to 39 is the 'HIGH' region element; sequence ITAYDLCHIGH. C208, H233, and E237 together coordinate Zn(2+). Positions 265 to 269 match the 'KMSKS' region motif; sequence KMSKS. K268 serves as a coordination point for ATP.

Belongs to the class-I aminoacyl-tRNA synthetase family. In terms of assembly, monomer. Zn(2+) serves as cofactor.

It is found in the cytoplasm. The catalysed reaction is tRNA(Cys) + L-cysteine + ATP = L-cysteinyl-tRNA(Cys) + AMP + diphosphate. This is Cysteine--tRNA ligase from Nitratidesulfovibrio vulgaris (strain DP4) (Desulfovibrio vulgaris).